Reading from the N-terminus, the 592-residue chain is MPDNILVAVAWPYANGPFHVGHIAGAYLPADVFARYQRLRGNRVLMVSGSDCHGTPITIAAEREGITPQDVIRRYHPTFLKTFQTLGISFDLFTQTYTDNHYRVTTDIFLRLLENGYLYKETMVGSYSETLGRFLPDRFVEGTCPNCGYPRARGDQCDGCGHLHDPQDLIAPRSVLDGAPVTFRETEHFFLDLAKLEPQLRAWLDSVDRSYWRPNTLLFTQNWLREGLRGRAITRDLEWGVPVPVDDPTFKDKRIYVWFDAVIGYYSASIEWAQRSGAPDAWQEWWVCRPDGSSPARSYYFIGKDNIPFHTIIWPAILIGYGDLALPYDVPANEFLNLEGDKMSTSRNWALWAPEIEERYQSDAIRYYLIANGPETRDSNWSWADFVQRVNSELVATWGNLANRVISLTHRNFGAVPQPGALIDADRQLIAATQQAFEQVTTLLEGVKLRAALQEAMALAQTANQYLSDQEPWKLVKSDQERAATVLFVALRTVDTLKTLFCPFLPFSSQRLHELLGYSGTIAPQPYVEETDAPDGAPRLILTGDYTTEAGLWTPSVLAPGQPIHAPAPLFQKLDESIVADELARLHAKVRS.

Positions 12–22 (PYANGPFHVGH) match the 'HIGH' region motif. Zn(2+) is bound by residues C144, C147, C157, and C160. Positions 342–346 (KMSTS) match the 'KMSKS' region motif. T345 is an ATP binding site.

Belongs to the class-I aminoacyl-tRNA synthetase family. MetG type 1 subfamily. Monomer. Zn(2+) serves as cofactor.

It is found in the cytoplasm. It catalyses the reaction tRNA(Met) + L-methionine + ATP = L-methionyl-tRNA(Met) + AMP + diphosphate. Functionally, is required not only for elongation of protein synthesis but also for the initiation of all mRNA translation through initiator tRNA(fMet) aminoacylation. The protein is Methionine--tRNA ligase of Roseiflexus sp. (strain RS-1).